The sequence spans 2225 residues: Multifunctional protein CAD (2225 aa).

Position 2 is an N-acetylalanine (A2). The segment at 2 to 365 (AALVLEDGSV…TVREAVAGNP (364 aa)) is GATase (Glutamine amidotransferase). Residues S44, G222, and G224 each coordinate L-glutamine. Positions 177 to 363 (RICALDCGLK…LETVREAVAG (187 aa)) constitute a Glutamine amidotransferase type-1 domain. C252 (nucleophile; for GATase activity) is an active-site residue. Residues L253, Q256, N294, G296, and F297 each contribute to the L-glutamine site. Catalysis depends on for GATase activity residues H336 and E338. The linker stretch occupies residues 366–394 (GGQTVKERLVQRLCPPGLLIPGSGLPPPR). Residues 395–933 (KVLILGSGGL…NTHDLDFRTP (539 aa)) are CPSase A. The CPSase (Carbamoyl phosphate synthase) stretch occupies residues 395-1455 (KVLILGSGGL…APPLKVHVDC (1061 aa)). T456 carries the phosphothreonine; by MAPK1 modification. ATP-binding residues include R515, R555, G561, G562, K592, E599, G625, I626, H627, Q668, and E682. Positions 519-711 (AARMAEIGEH…LAYVAAKLAL (193 aa)) constitute an ATP-grasp 1 domain. Mg(2+) contacts are provided by Q668, E682, and N684. Mn(2+) is bound by residues Q668, E682, and N684. K747 carries the N6-acetyllysine modification. Residues 934-1455 (HVLVLGSGVY…APPLKVHVDC (522 aa)) are CPSase B. S1038 carries the phosphoserine modification. The 192-residue stretch at 1052 to 1243 (SRLLDTIGIS…LVALATRIIM (192 aa)) folds into the ATP-grasp 2 domain. Residues R1088, K1127, I1129, E1134, G1159, V1160, H1161, S1162, Q1202, and E1214 each coordinate ATP. Residues Q1202, E1214, and N1216 each coordinate Mg(2+). Mn(2+)-binding residues include Q1202, E1214, and N1216. Residues 1308–1462 (FKIPKKNILL…VDCMTSQKLV (155 aa)) form the MGS-like domain. Position 1406 is a phosphoserine; by PKA (S1406). K1411 carries the N6-acetyllysine modification. The segment at 1456–1788 (MTSQKLVRLP…VKGTIRRVVL (333 aa)) is DHOase (dihydroorotase). Zn(2+) contacts are provided by H1471 and H1473. (S)-dihydroorotate-binding residues include R1475 and N1505. 5 residues coordinate Zn(2+): K1556, H1590, C1613, H1614, and E1637. At K1556 the chain carries N6-carboxylysine. A (S)-dihydroorotate-binding site is contributed by R1661. Residue D1686 participates in Zn(2+) binding. The For DHOase activity role is filled by D1686. (S)-dihydroorotate is bound by residues H1690 and P1702. Positions 1789 to 1917 (RGEVAYIDGQ…GLLHPQTSPL (129 aa)) are linker. The tract at residues 1813 to 1911 (PQGAVPQPPP…QNLGSSGLLH (99 aa)) is disordered. Residues 1825-1834 (PATTEITTTP) show a composition bias toward low complexity. S1859 carries the post-translational modification Phosphoserine; by RPS6KB1 and PKA. The segment covering 1866-1878 (EEPKEKPSRKVVE) has biased composition (basic and acidic residues). A Phosphoserine; by PKC; in vitro modification is found at S1873. T1884 bears the Phosphothreonine mark. Residues 1899–1911 (ASPQNLGSSGLLH) show a composition bias toward polar residues. Phosphoserine occurs at positions 1900 and 1938. An ATCase (Aspartate transcarbamylase) region spans residues 1918 to 2225 (LHSLVGQHIL…ALLATVLGRF (308 aa)). The carbamoyl phosphate site is built by R1975 and T1976. K2003 contributes to the L-aspartate binding site. R2024, H2052, and Q2055 together coordinate carbamoyl phosphate. Residues R2085 and R2146 each coordinate L-aspartate. 2 residues coordinate carbamoyl phosphate: M2185 and P2186.

This sequence in the N-terminal section; belongs to the CarA family. The protein in the 2nd section; belongs to the CarB family. In the 3rd section; belongs to the metallo-dependent hydrolases superfamily. DHOase family. CAD subfamily. It in the C-terminal section; belongs to the aspartate/ornithine carbamoyltransferase superfamily. ATCase family. As to quaternary structure, homohexamer. Interacts with CIPC. Zn(2+) is required as a cofactor. It depends on Mg(2+) as a cofactor. Mn(2+) serves as cofactor. In terms of processing, activated by MAP kinase (Erk1/2) phosphorylation just prior to the S phase of the cell cycle, when the demand for pyrimidine nucleotides is greatest, and down-regulated as the cells emerge from S phase by protein kinase A (PKA) phosphorylation. Phosphorylation at Ser-1859 by RPS6KB1 downstream of MTOR promotes oligomerization and stimulates dihydroorotase activity. Phosphorylation at Ser-1406 reduces sensitivity to feedback inhibition by UTP.

The protein resides in the cytoplasm. Its subcellular location is the nucleus. The catalysed reaction is hydrogencarbonate + L-glutamine + 2 ATP + H2O = carbamoyl phosphate + L-glutamate + 2 ADP + phosphate + 2 H(+). It catalyses the reaction L-glutamine + H2O = L-glutamate + NH4(+). The enzyme catalyses hydrogencarbonate + NH4(+) + 2 ATP = carbamoyl phosphate + 2 ADP + phosphate + 2 H(+). It carries out the reaction carbamoyl phosphate + L-aspartate = N-carbamoyl-L-aspartate + phosphate + H(+). The catalysed reaction is (S)-dihydroorotate + H2O = N-carbamoyl-L-aspartate + H(+). The protein operates within pyrimidine metabolism; UMP biosynthesis via de novo pathway; (S)-dihydroorotate from bicarbonate: step 1/3. Its pathway is pyrimidine metabolism; UMP biosynthesis via de novo pathway; (S)-dihydroorotate from bicarbonate: step 2/3. It participates in pyrimidine metabolism; UMP biosynthesis via de novo pathway; (S)-dihydroorotate from bicarbonate: step 3/3. With respect to regulation, allosterically regulated and controlled by phosphorylation. 5-phosphoribose 1-diphosphate (PRPP) is an activator while UMP and UTP are inhibitors of the CPSase reaction. Its function is as follows. Multifunctional protein that encodes the first 3 enzymatic activities of the de novo pyrimidine pathway: carbamoylphosphate synthetase (CPSase; EC 6.3.5.5), aspartate transcarbamylase (ATCase; EC 2.1.3.2) and dihydroorotase (DHOase; EC 3.5.2.3). The CPSase-function is accomplished in 2 steps, by a glutamine-dependent amidotransferase activity (GATase) that binds and cleaves glutamine to produce ammonia, followed by an ammonium-dependent carbamoyl phosphate synthetase, which reacts with the ammonia, hydrogencarbonate and ATP to form carbamoyl phosphate. The endogenously produced carbamoyl phosphate is sequestered and channeled to the ATCase active site. ATCase then catalyzes the formation of carbamoyl-L-aspartate from L-aspartate and carbamoyl phosphate. In the last step, DHOase catalyzes the cyclization of carbamoyl aspartate to dihydroorotate. In Mesocricetus auratus (Golden hamster), this protein is Multifunctional protein CAD (CAD).